The primary structure comprises 154 residues: Nucleoside diphosphate kinase A1 (154 aa).

ATP is bound by residues Lys-13, Phe-61, Arg-89, Thr-95, Arg-106, and Asn-116. His-119 serves as the catalytic Pros-phosphohistidine intermediate.

It belongs to the NDK family. It depends on Mg(2+) as a cofactor.

It localises to the cytoplasm. It catalyses the reaction a 2'-deoxyribonucleoside 5'-diphosphate + ATP = a 2'-deoxyribonucleoside 5'-triphosphate + ADP. It carries out the reaction a ribonucleoside 5'-diphosphate + ATP = a ribonucleoside 5'-triphosphate + ADP. Functionally, major role in the synthesis of nucleoside triphosphates other than ATP. The ATP gamma phosphate is transferred to the NDP beta phosphate via a ping-pong mechanism, using a phosphorylated active-site intermediate. The sequence is that of Nucleoside diphosphate kinase A1 from Xenopus laevis (African clawed frog).